The sequence spans 299 residues: Lipoyl synthase (299 aa).

Residues Cys34, Cys39, Cys45, Cys60, Cys64, Cys67, and Ser273 each contribute to the [4Fe-4S] cluster site. One can recognise a Radical SAM core domain in the interval 46-262 (WNKKHATVMI…KYVAYSKGFL (217 aa)).

The protein belongs to the radical SAM superfamily. Lipoyl synthase family. [4Fe-4S] cluster serves as cofactor.

The protein resides in the cytoplasm. It catalyses the reaction [[Fe-S] cluster scaffold protein carrying a second [4Fe-4S](2+) cluster] + N(6)-octanoyl-L-lysyl-[protein] + 2 oxidized [2Fe-2S]-[ferredoxin] + 2 S-adenosyl-L-methionine + 4 H(+) = [[Fe-S] cluster scaffold protein] + N(6)-[(R)-dihydrolipoyl]-L-lysyl-[protein] + 4 Fe(3+) + 2 hydrogen sulfide + 2 5'-deoxyadenosine + 2 L-methionine + 2 reduced [2Fe-2S]-[ferredoxin]. It participates in protein modification; protein lipoylation via endogenous pathway; protein N(6)-(lipoyl)lysine from octanoyl-[acyl-carrier-protein]: step 2/2. Its function is as follows. Catalyzes the radical-mediated insertion of two sulfur atoms into the C-6 and C-8 positions of the octanoyl moiety bound to the lipoyl domains of lipoate-dependent enzymes, thereby converting the octanoylated domains into lipoylated derivatives. The polypeptide is Lipoyl synthase (Ehrlichia canis (strain Jake)).